Consider the following 464-residue polypeptide: Formin-like protein 19 (464 aa).

Residues 1 to 74 (MSLVDISGAY…PRPCSRPPKT (74 aa)) are disordered. A compositionally biased stretch (pro residues) spans 14 to 70 (PLPPPPPPLMRRRAPLPPPPPPPLMRRRAPPPPPPPLMRRRAPPPPPPPPLPRPCSR). An FH2 domain is found at 68-462 (CSRPPKTKCS…KAAKEAEMEK (395 aa)).

It belongs to the formin-like family. Class-II subfamily.

This chain is Formin-like protein 19 (FH19), found in Arabidopsis thaliana (Mouse-ear cress).